The chain runs to 740 residues: MTIAIRTTLDEPENHSDFVPHRPSRPEKTEPSKPFRLVSDYEPAGDQPQAISALCKDIQKGERDQVLLGVTGSGKTFTMAKVIEKLQRPSLILAPNKILAAQLYGEFKRFFPENAVEFFVSYYDYYQPEAYVPRTDTYIEKDSAINEAIDRMRHAATRSLLEREDVIIVASVSCLYGIGSVDTYSSMTFRLLKGQLVDQREIIRRLVALQYKRNEVAFGRGSFRVKGDTLEIFPSHYEDMAWRISFFGDEIEEISEFDPLTGVKIAKLDQIKIYANSHYVTPEPTLKAANNAIRRELDNRLREFKAEGKLLEAQRLEERTEFDLEMMAATGACSGIENYSRFLTGRAPGEPPPTLFEYLPDNALLFVDESHQTIPQINGMSRGDYRRKTTLADYGFRLPSCIDNRPLRFEEWNAMRPQTVYVSATPGPWELEQTGGVFVEQIIRPTGLVDPAIEVRPIEEQVDNLIFEAKKTAAAGWRSLVTTLTKRMAEDLTEYMYEAGLKVRYMHSDVETIERIELIRDLRLGVYDVLIGINLLREGLDIPECGLVAVLDADKEGFLRSETSLIQTIGRAARNAEGRVILYGDKITGSMARAMAETERRRIKQIAWNKAHNITPATVKRQVDDIVGHFGVVNSSEAAATIENHDPKVLARSISETEKEMLEAAANLEFEKAAQLRDVLHQLKRQELGLPPEKSSEIQGRSEAGRPGTRKTRSDKAREAKASKRVKQEAGEKLLRSRGH.

Residues 1–36 (MTIAIRTTLDEPENHSDFVPHRPSRPEKTEPSKPFR) form a disordered region. Residues 8–33 (TLDEPENHSDFVPHRPSRPEKTEPSK) are compositionally biased toward basic and acidic residues. Residues 56–444 (KDIQKGERDQ…GGVFVEQIIR (389 aa)) enclose the Helicase ATP-binding domain. 69-76 (GVTGSGKT) is a binding site for ATP. Residues 122 to 145 (YYDYYQPEAYVPRTDTYIEKDSAI) carry the Beta-hairpin motif. Residues 461 to 627 (QVDNLIFEAK…TVKRQVDDIV (167 aa)) enclose the Helicase C-terminal domain. In terms of domain architecture, UVR spans 651–686 (ARSISETEKEMLEAAANLEFEKAAQLRDVLHQLKRQ). The segment at 687–740 (ELGLPPEKSSEIQGRSEAGRPGTRKTRSDKAREAKASKRVKQEAGEKLLRSRGH) is disordered. Basic and acidic residues predominate over residues 712–740 (TRSDKAREAKASKRVKQEAGEKLLRSRGH).

This sequence belongs to the UvrB family. Forms a heterotetramer with UvrA during the search for lesions. Interacts with UvrC in an incision complex.

The protein localises to the cytoplasm. Its function is as follows. The UvrABC repair system catalyzes the recognition and processing of DNA lesions. A damage recognition complex composed of 2 UvrA and 2 UvrB subunits scans DNA for abnormalities. Upon binding of the UvrA(2)B(2) complex to a putative damaged site, the DNA wraps around one UvrB monomer. DNA wrap is dependent on ATP binding by UvrB and probably causes local melting of the DNA helix, facilitating insertion of UvrB beta-hairpin between the DNA strands. Then UvrB probes one DNA strand for the presence of a lesion. If a lesion is found the UvrA subunits dissociate and the UvrB-DNA preincision complex is formed. This complex is subsequently bound by UvrC and the second UvrB is released. If no lesion is found, the DNA wraps around the other UvrB subunit that will check the other stand for damage. The protein is UvrABC system protein B of Zymomonas mobilis subsp. mobilis (strain ATCC 31821 / ZM4 / CP4).